Here is a 627-residue protein sequence, read N- to C-terminus: 1-deoxy-D-xylulose-5-phosphate synthase (627 aa).

Thiamine diphosphate contacts are provided by residues histidine 72 and 113–115; that span reads GHS. Aspartate 144 contributes to the Mg(2+) binding site. Thiamine diphosphate contacts are provided by residues 145–146, asparagine 173, tyrosine 283, and glutamate 366; that span reads GA. A Mg(2+)-binding site is contributed by asparagine 173.

This sequence belongs to the transketolase family. DXPS subfamily. Homodimer. It depends on Mg(2+) as a cofactor. The cofactor is thiamine diphosphate.

It carries out the reaction D-glyceraldehyde 3-phosphate + pyruvate + H(+) = 1-deoxy-D-xylulose 5-phosphate + CO2. The protein operates within metabolic intermediate biosynthesis; 1-deoxy-D-xylulose 5-phosphate biosynthesis; 1-deoxy-D-xylulose 5-phosphate from D-glyceraldehyde 3-phosphate and pyruvate: step 1/1. In terms of biological role, catalyzes the acyloin condensation reaction between C atoms 2 and 3 of pyruvate and glyceraldehyde 3-phosphate to yield 1-deoxy-D-xylulose-5-phosphate (DXP). The polypeptide is 1-deoxy-D-xylulose-5-phosphate synthase (Macrococcus caseolyticus (strain JCSC5402) (Macrococcoides caseolyticum)).